The following is a 173-amino-acid chain: Adenine phosphoribosyltransferase (173 aa).

It belongs to the purine/pyrimidine phosphoribosyltransferase family. As to quaternary structure, homodimer.

It localises to the cytoplasm. The catalysed reaction is AMP + diphosphate = 5-phospho-alpha-D-ribose 1-diphosphate + adenine. It participates in purine metabolism; AMP biosynthesis via salvage pathway; AMP from adenine: step 1/1. Its function is as follows. Catalyzes a salvage reaction resulting in the formation of AMP, that is energically less costly than de novo synthesis. This Listeria monocytogenes serovar 1/2a (strain ATCC BAA-679 / EGD-e) protein is Adenine phosphoribosyltransferase.